A 146-amino-acid polypeptide reads, in one-letter code: DNA-directed RNA polymerases II, IV and V subunit 8B (146 aa).

The protein belongs to the eukaryotic RPB8 RNA polymerase subunit family. In terms of assembly, component of the RNA polymerase II, IV and V complexes. Associates with the mediator complex.

The protein resides in the nucleus. Its function is as follows. DNA-dependent RNA polymerase catalyzes the transcription of DNA into RNA using the four ribonucleoside triphosphates as substrates. Component of RNA polymerase II which synthesizes mRNA precursors and many functional non-coding RNAs. Pol II is the central component of the basal RNA polymerase II transcription machinery. It is composed of mobile elements that move relative to each other. Component of RNA polymerases IV and V which mediate short-interfering RNAs (siRNA) accumulation and subsequent RNA-directed DNA methylation-dependent (RdDM) transcriptional gene silencing (TGS) of endogenous repeated sequences, including transposable elements. The protein is DNA-directed RNA polymerases II, IV and V subunit 8B (NRPB8B) of Arabidopsis thaliana (Mouse-ear cress).